The primary structure comprises 233 residues: 5'-methylthioadenosine/S-adenosylhomocysteine nucleosidase (233 aa).

The active-site Proton acceptor is Glu-12. Residues Gly-78, Ile-152, and 173–174 each bind substrate; that span reads ME. The active-site Proton donor is Asp-197.

Belongs to the PNP/UDP phosphorylase family. MtnN subfamily. Homodimer.

The enzyme catalyses S-adenosyl-L-homocysteine + H2O = S-(5-deoxy-D-ribos-5-yl)-L-homocysteine + adenine. The catalysed reaction is S-methyl-5'-thioadenosine + H2O = 5-(methylsulfanyl)-D-ribose + adenine. It carries out the reaction 5'-deoxyadenosine + H2O = 5-deoxy-D-ribose + adenine. The protein operates within amino-acid biosynthesis; L-methionine biosynthesis via salvage pathway; S-methyl-5-thio-alpha-D-ribose 1-phosphate from S-methyl-5'-thioadenosine (hydrolase route): step 1/2. In terms of biological role, catalyzes the irreversible cleavage of the glycosidic bond in both 5'-methylthioadenosine (MTA) and S-adenosylhomocysteine (SAH/AdoHcy) to adenine and the corresponding thioribose, 5'-methylthioribose and S-ribosylhomocysteine, respectively. Also cleaves 5'-deoxyadenosine, a toxic by-product of radical S-adenosylmethionine (SAM) enzymes, into 5-deoxyribose and adenine. Thus, is required for in vivo function of the radical SAM enzymes biotin synthase and lipoic acid synthase, that are inhibited by 5'-deoxyadenosine accumulation. The sequence is that of 5'-methylthioadenosine/S-adenosylhomocysteine nucleosidase from Yersinia pestis bv. Antiqua (strain Antiqua).